The chain runs to 574 residues: Sulfate adenylyltransferase (574 aa).

The interval 1 to 170 is N-terminal; sequence MANTPHGGVL…LEAINRLEHY (170 aa). A catalytic region spans residues 171-395; that stretch reads DFLDLRFTPS…LREENPLPAE (225 aa). Q198 is a sulfate binding site. ATP is bound by residues 198–201 and 292–295; these read QTRN and GRDH. Catalysis depends on residues T199, R200, and N201. Residue R200 coordinates sulfate. Residue A296 coordinates sulfate. Position 334 (M334) interacts with ATP. The allosteric regulation domain; adenylyl-sulfate kinase-like stretch occupies residues 396–574; the sequence is KGFTVFMTGY…LESNGLLDRL (179 aa). 3'-phosphoadenylyl sulfate contacts are provided by residues 435–438, R452, 478–479, and K516; these read ENVR and IA.

It in the N-terminal section; belongs to the sulfate adenylyltransferase family. This sequence in the C-terminal section; belongs to the APS kinase family. As to quaternary structure, homohexamer. Dimer of trimers.

The protein resides in the cytoplasm. The enzyme catalyses sulfate + ATP + H(+) = adenosine 5'-phosphosulfate + diphosphate. Its pathway is sulfur metabolism; hydrogen sulfide biosynthesis; sulfite from sulfate: step 1/3. Its activity is regulated as follows. Allosterically inhibited by 3'-phosphoadenosine 5'-phosphosulfate (PAPS). Its function is as follows. Catalyzes the first intracellular reaction of sulfate assimilation, forming adenosine-5'-phosphosulfate (APS) from inorganic sulfate and ATP. Plays an important role in sulfate activation as a component of the biosynthesis pathway of sulfur-containing amino acids. The chain is Sulfate adenylyltransferase from Gibberella zeae (strain ATCC MYA-4620 / CBS 123657 / FGSC 9075 / NRRL 31084 / PH-1) (Wheat head blight fungus).